A 393-amino-acid chain; its full sequence is NAD(P)H-quinone oxidoreductase subunit H, chloroplastic (393 aa).

It belongs to the complex I 49 kDa subunit family. NDH is composed of at least 16 different subunits, 5 of which are encoded in the nucleus.

It is found in the plastid. It localises to the chloroplast thylakoid membrane. It catalyses the reaction a plastoquinone + NADH + (n+1) H(+)(in) = a plastoquinol + NAD(+) + n H(+)(out). It carries out the reaction a plastoquinone + NADPH + (n+1) H(+)(in) = a plastoquinol + NADP(+) + n H(+)(out). In terms of biological role, NDH shuttles electrons from NAD(P)H:plastoquinone, via FMN and iron-sulfur (Fe-S) centers, to quinones in the photosynthetic chain and possibly in a chloroplast respiratory chain. The immediate electron acceptor for the enzyme in this species is believed to be plastoquinone. Couples the redox reaction to proton translocation, and thus conserves the redox energy in a proton gradient. This Sorghum bicolor (Sorghum) protein is NAD(P)H-quinone oxidoreductase subunit H, chloroplastic.